Reading from the N-terminus, the 23-residue chain is Dermaseptin III-like peptide (23 aa).

As to expression, expressed by the skin glands.

The protein localises to the secreted. Possesses a potent antimicrobial activity against bacteria, fungi and protozoa. Probably acts by disturbing membrane functions with its amphipathic structure. In Phyllomedusa burmeisteri (Brazilian common walking leaf frog), this protein is Dermaseptin III-like peptide.